Here is a 386-residue protein sequence, read N- to C-terminus: Protein RecA (386 aa).

Residue 76–83 coordinates ATP; it reads GPESSGKT. The tract at residues 362-386 is disordered; sequence FDDEDDDFDASTAPAGTFTEVTTEN.

This sequence belongs to the RecA family.

The protein resides in the cytoplasm. Functionally, can catalyze the hydrolysis of ATP in the presence of single-stranded DNA, the ATP-dependent uptake of single-stranded DNA by duplex DNA, and the ATP-dependent hybridization of homologous single-stranded DNAs. It interacts with LexA causing its activation and leading to its autocatalytic cleavage. In Corynebacterium efficiens (strain DSM 44549 / YS-314 / AJ 12310 / JCM 11189 / NBRC 100395), this protein is Protein RecA.